The sequence spans 141 residues: D-aminoacyl-tRNA deacylase (141 aa).

A Gly-cisPro motif, important for rejection of L-amino acids motif is present at residues 133–134; that stretch reads GP.

The protein belongs to the DTD family. Homodimer.

It localises to the cytoplasm. It catalyses the reaction glycyl-tRNA(Ala) + H2O = tRNA(Ala) + glycine + H(+). It carries out the reaction a D-aminoacyl-tRNA + H2O = a tRNA + a D-alpha-amino acid + H(+). Functionally, an aminoacyl-tRNA editing enzyme that deacylates mischarged D-aminoacyl-tRNAs. Also deacylates mischarged glycyl-tRNA(Ala), protecting cells against glycine mischarging by AlaRS. Acts via tRNA-based rather than protein-based catalysis; rejects L-amino acids rather than detecting D-amino acids in the active site. By recycling D-aminoacyl-tRNA to D-amino acids and free tRNA molecules, this enzyme counteracts the toxicity associated with the formation of D-aminoacyl-tRNA entities in vivo and helps enforce protein L-homochirality. In Beutenbergia cavernae (strain ATCC BAA-8 / DSM 12333 / CCUG 43141 / JCM 11478 / NBRC 16432 / NCIMB 13614 / HKI 0122), this protein is D-aminoacyl-tRNA deacylase.